The sequence spans 122 residues: Small ribosomal subunit protein uS13 (122 aa).

The interval 94 to 122 is disordered; it reads RGLPVRGQRTKTNARQRKGPRPAIGGRKK.

It belongs to the universal ribosomal protein uS13 family. As to quaternary structure, part of the 30S ribosomal subunit. Forms a loose heterodimer with protein S19. Forms two bridges to the 50S subunit in the 70S ribosome.

Located at the top of the head of the 30S subunit, it contacts several helices of the 16S rRNA. In the 70S ribosome it contacts the 23S rRNA (bridge B1a) and protein L5 of the 50S subunit (bridge B1b), connecting the 2 subunits; these bridges are implicated in subunit movement. Contacts the tRNAs in the A and P-sites. The chain is Small ribosomal subunit protein uS13 from Rubrobacter xylanophilus (strain DSM 9941 / JCM 11954 / NBRC 16129 / PRD-1).